The chain runs to 224 residues: 7-cyano-7-deazaguanine synthase (224 aa).

Residue 12-22 participates in ATP binding; the sequence is LSGGLDSSTVT. 4 residues coordinate Zn(2+): Cys193, Cys201, Cys204, and Cys207.

The protein belongs to the QueC family. Zn(2+) serves as cofactor.

The enzyme catalyses 7-carboxy-7-deazaguanine + NH4(+) + ATP = 7-cyano-7-deazaguanine + ADP + phosphate + H2O + H(+). It participates in purine metabolism; 7-cyano-7-deazaguanine biosynthesis. In terms of biological role, catalyzes the ATP-dependent conversion of 7-carboxy-7-deazaguanine (CDG) to 7-cyano-7-deazaguanine (preQ(0)). This chain is 7-cyano-7-deazaguanine synthase, found in Prochlorococcus marinus (strain MIT 9515).